Reading from the N-terminus, the 959-residue chain is AP2-associated protein kinase 1 (959 aa).

Residue methionine 1 is modified to N-acetylmethionine. Residues 1–11 are compositionally biased toward basic and acidic residues; it reads MKKFFDSRREQ. Residues 1–27 form a disordered region; it reads MKKFFDSRREQGSSGLGSGSSGGGGSS. Phosphoserine is present on serine 14. The segment covering 14 to 27 has biased composition (gly residues); sequence SGLGSGSSGGGGSS. A Protein kinase domain is found at 46–315; sequence VTVDEVLAEG…QVSYFSFKLL (270 aa). ATP is bound by residues 52-60 and lysine 74; that span reads LAEGGFALV. Aspartate 176 (proton acceptor) is an active-site residue. Position 234 is a phosphotyrosine (tyrosine 234). Serine 235 carries the phosphoserine modification. A disordered region spans residues 340 to 385; that stretch reads SEAAVKKTQPKARLTDPIPTTETSIAPRQRPKAGQTQPNPGILPIQ. A phosphothreonine mark is found at threonine 354 and threonine 389. Residue arginine 391 is modified to Omega-N-methylarginine. 2 disordered regions span residues 398–514 and 578–630; these read PLPQ…AVHP and TAPQ…RAGH. The segment covering 404–419 has biased composition (polar residues); it reads GPSNQPGLLPSVSQPK. Over residues 420–435 the composition is skewed to low complexity; it reads AQATPSQPLQSSQPKQ. Phosphothreonine is present on threonine 441. Low complexity-rich tracts occupy residues 444–481, 494–510, and 578–603; these read QTPA…QPQQ, QQQQ…QQFQ, and TAPQ…KVQT. At threonine 604 the chain carries Phosphothreonine. Over residues 609–625 the composition is skewed to polar residues; sequence IQGQKVGSLTPPSSPKT. Position 616 is a phosphoserine (serine 616). At threonine 618 the chain carries Phosphothreonine. Serine 621, serine 622, serine 635, and serine 648 each carry phosphoserine. Threonine 651 bears the Phosphothreonine mark. Disordered stretches follow at residues 662–699, 727–763, 837–857, and 923–943; these read SLNK…FDDD, GGSA…GGQA, PVAQ…TDSL, and ITKN…ESSL. Residues 670–694 are compositionally biased toward polar residues; it reads TTTPSGSPRTSQQNVSNASEGSTWN. At serine 729 the chain carries Phosphoserine. 2 stretches are compositionally biased toward polar residues: residues 738 to 752 and 842 to 857; these read QPTQ…SFSA and LPSQ…TDSL. The segment at 821 to 958 is clathrin-binding domain (CBD); that stretch reads DKADVAVESL…SLLLVDQLID (138 aa). Phosphoserine occurs at positions 844, 935, and 936. Low complexity predominate over residues 929-942; it reads GGHSRNSSGSSESS.

The protein belongs to the protein kinase superfamily. Ser/Thr protein kinase family. In terms of assembly, interacts (via CBD domain) with clathrin. Interacts with AP-2 complex. Interacts with NUMB. Interacts with alpha-adaptin. Interacts with EPS15 isoform 2. Interacts with membrane-bound activated NOTCH1 but not with the inactive full-length form of NOTCH1. Preferentially interacts with monoubiquitinated activated NOTCH1 compared to the non-ubiquitinated form. In terms of processing, autophosphorylated.

The protein localises to the cell membrane. It localises to the membrane. Its subcellular location is the clathrin-coated pit. It is found in the presynapse. The enzyme catalyses L-seryl-[protein] + ATP = O-phospho-L-seryl-[protein] + ADP + H(+). It carries out the reaction L-threonyl-[protein] + ATP = O-phospho-L-threonyl-[protein] + ADP + H(+). With respect to regulation, stimulated by clathrin. In terms of biological role, regulates clathrin-mediated endocytosis by phosphorylating the AP2M1/mu2 subunit of the adaptor protein complex 2 (AP-2) which ensures high affinity binding of AP-2 to cargo membrane proteins during the initial stages of endocytosis. Preferentially, may phosphorylate substrates on threonine residues. Regulates phosphorylation of other AP-2 subunits as well as AP-2 localization and AP-2-mediated internalization of ligand complexes. Phosphorylates NUMB and regulates its cellular localization, promoting NUMB localization to endosomes. Binds to and stabilizes the activated form of NOTCH1, increases its localization in endosomes and regulates its transcriptional activity. The chain is AP2-associated protein kinase 1 (Aak1) from Mus musculus (Mouse).